The following is a 754-amino-acid chain: 5-methyltetrahydropteroyltriglutamate--homocysteine methyltransferase (754 aa).

Residues 17 to 20 and lysine 110 contribute to the 5-methyltetrahydropteroyltri-L-glutamate site; that span reads RELK. L-homocysteine contacts are provided by residues 421-423 and glutamate 474; that span reads IGS. L-methionine contacts are provided by residues 421–423 and glutamate 474; that span reads IGS. 5-methyltetrahydropteroyltri-L-glutamate contacts are provided by residues 505–506 and tryptophan 551; that span reads RC. Residue aspartate 589 participates in L-homocysteine binding. Aspartate 589 provides a ligand contact to L-methionine. Glutamate 595 is a 5-methyltetrahydropteroyltri-L-glutamate binding site. Zn(2+) contacts are provided by histidine 631, cysteine 633, and glutamate 655. Histidine 684 acts as the Proton donor in catalysis. Position 716 (cysteine 716) interacts with Zn(2+).

The protein belongs to the vitamin-B12 independent methionine synthase family. The cofactor is Zn(2+).

The enzyme catalyses 5-methyltetrahydropteroyltri-L-glutamate + L-homocysteine = tetrahydropteroyltri-L-glutamate + L-methionine. The protein operates within amino-acid biosynthesis; L-methionine biosynthesis via de novo pathway; L-methionine from L-homocysteine (MetE route): step 1/1. In terms of biological role, catalyzes the transfer of a methyl group from 5-methyltetrahydrofolate to homocysteine resulting in methionine formation. The protein is 5-methyltetrahydropteroyltriglutamate--homocysteine methyltransferase of Synechococcus sp. (strain JA-2-3B'a(2-13)) (Cyanobacteria bacterium Yellowstone B-Prime).